The sequence spans 425 residues: Serine--tRNA ligase (425 aa).

228–230 serves as a coordination point for L-serine; the sequence is TAE. 259 to 261 contacts ATP; that stretch reads RSE. E282 is a binding site for L-serine. 346–349 lines the ATP pocket; sequence EIAS. S382 contributes to the L-serine binding site.

It belongs to the class-II aminoacyl-tRNA synthetase family. Type-1 seryl-tRNA synthetase subfamily. Homodimer. The tRNA molecule binds across the dimer.

Its subcellular location is the cytoplasm. It carries out the reaction tRNA(Ser) + L-serine + ATP = L-seryl-tRNA(Ser) + AMP + diphosphate + H(+). The enzyme catalyses tRNA(Sec) + L-serine + ATP = L-seryl-tRNA(Sec) + AMP + diphosphate + H(+). The protein operates within aminoacyl-tRNA biosynthesis; selenocysteinyl-tRNA(Sec) biosynthesis; L-seryl-tRNA(Sec) from L-serine and tRNA(Sec): step 1/1. Its function is as follows. Catalyzes the attachment of serine to tRNA(Ser). Is also able to aminoacylate tRNA(Sec) with serine, to form the misacylated tRNA L-seryl-tRNA(Sec), which will be further converted into selenocysteinyl-tRNA(Sec). The polypeptide is Serine--tRNA ligase (Rickettsia akari (strain Hartford)).